A 209-amino-acid chain; its full sequence is Small ribosomal subunit protein uS3 (209 aa).

Residues 38–107 (IRKVIKNKYA…RFIVNVEEIK (70 aa)) form the KH type-2 domain.

Belongs to the universal ribosomal protein uS3 family. In terms of assembly, part of the 30S ribosomal subunit. Forms a tight complex with proteins S10 and S14.

Binds the lower part of the 30S subunit head. Binds mRNA in the 70S ribosome, positioning it for translation. The polypeptide is Small ribosomal subunit protein uS3 (Thermosipho africanus (strain TCF52B)).